We begin with the raw amino-acid sequence, 147 residues long: Myoglobin (147 aa).

The 140-residue stretch at 2–141 (ADFDMVLKCW…IIADMEADYK (140 aa)) folds into the Globin domain. Nitrite is bound at residue H60. H60 is a binding site for O2. Position 89 (H89) interacts with heme b.

It belongs to the globin family. Monomeric.

It is found in the cytoplasm. The protein localises to the sarcoplasm. It catalyses the reaction Fe(III)-heme b-[protein] + nitric oxide + H2O = Fe(II)-heme b-[protein] + nitrite + 2 H(+). It carries out the reaction H2O2 + AH2 = A + 2 H2O. Monomeric heme protein which primary function is to store oxygen and facilitate its diffusion within muscle tissues. Reversibly binds oxygen through a pentacoordinated heme iron and enables its timely and efficient release as needed during periods of heightened demand. Depending on the oxidative conditions of tissues and cells, and in addition to its ability to bind oxygen, it also has a nitrite reductase activity whereby it regulates the production of bioactive nitric oxide. Under stress conditions, like hypoxia and anoxia, it also protects cells against reactive oxygen species thanks to its pseudoperoxidase activity. The protein is Myoglobin (mb) of Notothenia neglecta (Yellowbelly rockcod).